The following is a 428-amino-acid chain: Small ribosomal subunit protein uS2m (428 aa).

Residues 30 to 50 (FLSQDNFTAPPPPPTNSKKQA) form a disordered region.

This sequence belongs to the universal ribosomal protein uS2 family. Component of the mitochondrial small ribosomal subunit (mt-SSU). Mature N.crassa 74S mitochondrial ribosomes consist of a small (37S) and a large (54S) subunit. The 37S small subunit contains a 16S ribosomal RNA (16S mt-rRNA) and 32 different proteins. The 54S large subunit contains a 23S rRNA (23S mt-rRNA) and 42 different proteins.

It is found in the mitochondrion. Functionally, component of the mitochondrial ribosome (mitoribosome), a dedicated translation machinery responsible for the synthesis of mitochondrial genome-encoded proteins, including at least some of the essential transmembrane subunits of the mitochondrial respiratory chain. The mitoribosomes are attached to the mitochondrial inner membrane and translation products are cotranslationally integrated into the membrane. The sequence is that of Small ribosomal subunit protein uS2m (mrp4) from Neurospora crassa (strain ATCC 24698 / 74-OR23-1A / CBS 708.71 / DSM 1257 / FGSC 987).